The sequence spans 314 residues: tRNA pseudouridine synthase B (314 aa).

H43 is a binding site for substrate. D48 serves as the catalytic Nucleophile. Substrate is bound by residues Y76, Y179, and L200.

Belongs to the pseudouridine synthase TruB family. Type 1 subfamily.

It carries out the reaction uridine(55) in tRNA = pseudouridine(55) in tRNA. Responsible for synthesis of pseudouridine from uracil-55 in the psi GC loop of transfer RNAs. The protein is tRNA pseudouridine synthase B of Shigella dysenteriae serotype 1 (strain Sd197).